The chain runs to 130 residues: Calcium-binding protein KRP1 (130 aa).

Residues 72–107 (LTDEDVRCMIKEGDFDCDGALNQMEFCVLMFRLSPD) form the EF-hand domain. Ca(2+)-binding residues include Asp-85, Asp-87, Asp-89, and Glu-96.

Functionally, potential calcium sensor that binds calcium in vitro. This is Calcium-binding protein KRP1 from Arabidopsis thaliana (Mouse-ear cress).